Reading from the N-terminus, the 228-residue chain is Tungstate uptake system permease protein TupB (228 aa).

The next 5 membrane-spanning stretches (helical) occupy residues 25 to 45 (IIFL…AVSI), 65 to 85 (VLYS…AIGL), 102 to 122 (AMII…TYSL), 144 to 164 (VIIL…VTTF), and 203 to 223 (MAIA…AVIY). The ABC transmembrane type-1 domain occupies 26–222 (IFLSVFVSST…MISFAINAVI (197 aa)).

This sequence belongs to the binding-protein-dependent transport system permease family. The complex is composed of two ATP-binding proteins (TupC), two transmembrane proteins (TupB) and a solute-binding protein (TupA).

It is found in the cell membrane. In terms of biological role, part of an ABC transporter complex involved in tungstate uptake. Probably responsible for the translocation of the substrate across the membrane. The protein is Tungstate uptake system permease protein TupB of Peptoclostridium acidaminophilum (Eubacterium acidaminophilum).